The following is a 79-amino-acid chain: Putative membrane protein insertion efficiency factor (79 aa).

It belongs to the UPF0161 family.

The protein localises to the cell inner membrane. Functionally, could be involved in insertion of integral membrane proteins into the membrane. The protein is Putative membrane protein insertion efficiency factor of Synechocystis sp. (strain ATCC 27184 / PCC 6803 / Kazusa).